A 428-amino-acid polypeptide reads, in one-letter code: Cell division cycle 20.6, cofactor of APC complex (428 aa).

WD repeat units follow at residues 106–145, 150–189, 193–230, 234–273, 282–324, 326–367, and 370–409; these read WFLTDNLVFFFVDIEEYIVIEQLGDTVYLWDASSCYTSKL, DENGPVTSINWTQDGLDLAVGLDNSEVQVWDCVSNRHVRT, GHESRVGSLAWNNHILTTGGMDGKIVNNDVRIRSSIIG, GHTEEVCGLKWSESGKKLASGGNDNVVHIWDRSLASSNPT, EHTA…CLNS, ETGS…KMAE, and GHTSRVLFMAQSPDGCTVASAAGDETLRLWNVFGEPPKTT.

Belongs to the WD repeat CDC20/Fizzy family. The APC/C is composed of at least 11 subunits that stay tightly associated throughout the cell cycle.

It is found in the nucleus. It functions in the pathway protein modification; protein ubiquitination. Functionally, component of the anaphase promoting complex/cyclosome (APC/C), a cell cycle-regulated E3 ubiquitin-protein ligase complex that controls progression through mitosis and the G1 phase of the cell cycle. The polypeptide is Cell division cycle 20.6, cofactor of APC complex (CDC20-6) (Arabidopsis thaliana (Mouse-ear cress)).